The sequence spans 487 residues: UDP-N-acetylmuramate--L-alanine ligase (487 aa).

126-132 provides a ligand contact to ATP; sequence GTHGKTT.

The protein belongs to the MurCDEF family.

The protein localises to the cytoplasm. It catalyses the reaction UDP-N-acetyl-alpha-D-muramate + L-alanine + ATP = UDP-N-acetyl-alpha-D-muramoyl-L-alanine + ADP + phosphate + H(+). The protein operates within cell wall biogenesis; peptidoglycan biosynthesis. Cell wall formation. The polypeptide is UDP-N-acetylmuramate--L-alanine ligase (Proteus mirabilis (strain HI4320)).